The chain runs to 248 residues: UPF0280 protein Maeo_0343 (248 aa).

Belongs to the UPF0280 family.

This chain is UPF0280 protein Maeo_0343, found in Methanococcus aeolicus (strain ATCC BAA-1280 / DSM 17508 / OCM 812 / Nankai-3).